We begin with the raw amino-acid sequence, 417 residues long: Serine hydroxymethyltransferase (417 aa).

(6S)-5,6,7,8-tetrahydrofolate is bound by residues Leu120 and 124–126; that span reads GHL. The residue at position 229 (Lys229) is an N6-(pyridoxal phosphate)lysine.

Belongs to the SHMT family. Homodimer. Pyridoxal 5'-phosphate serves as cofactor.

The protein localises to the cytoplasm. The enzyme catalyses (6R)-5,10-methylene-5,6,7,8-tetrahydrofolate + glycine + H2O = (6S)-5,6,7,8-tetrahydrofolate + L-serine. The protein operates within one-carbon metabolism; tetrahydrofolate interconversion. It functions in the pathway amino-acid biosynthesis; glycine biosynthesis; glycine from L-serine: step 1/1. Its function is as follows. Catalyzes the reversible interconversion of serine and glycine with tetrahydrofolate (THF) serving as the one-carbon carrier. This reaction serves as the major source of one-carbon groups required for the biosynthesis of purines, thymidylate, methionine, and other important biomolecules. Also exhibits THF-independent aldolase activity toward beta-hydroxyamino acids, producing glycine and aldehydes, via a retro-aldol mechanism. This Anaeromyxobacter sp. (strain Fw109-5) protein is Serine hydroxymethyltransferase.